Here is a 59-residue protein sequence, read N- to C-terminus: Small integral membrane protein 30 (59 aa).

Positions 1–24 are cleaved as a signal peptide; sequence MNSVSTQLILVLASLLLILPVVEA. At 25–29 the chain is on the extracellular side; sequence VEAGD. The helical transmembrane segment at 30–50 threads the bilayer; it reads AIALLLGVVLSITGICACLGI. The Cytoplasmic segment spans residues 51-59; sequence YARKRNGQM.

As to quaternary structure, interacts (via transmembrane domain) with antiviral protein MAVS (via transmembrane domain); the interaction disrupts MAVS interaction with RIGI and inhibits MAVS aggregation, resulting in the repression of type I interferon signaling and innate immune responses.

It localises to the endoplasmic reticulum membrane. The protein resides in the mitochondrion membrane. In terms of biological role, negatively regulates antiviral innate immune responses. Disrupts the interaction of antiviral protein MAVS with innate immune receptor RIGI and inhibits MAVS aggregation, resulting in the repression of type I interferon signaling and innate immune responses. In Mus musculus (Mouse), this protein is Small integral membrane protein 30.